Reading from the N-terminus, the 295-residue chain is Nitrogenase iron protein (295 aa).

10–17 contributes to the ATP binding site; it reads GKGGIGKS. Cys-98 is a binding site for [4Fe-4S] cluster. Arg-101 is subject to ADP-ribosylarginine; by dinitrogenase reductase ADP-ribosyltransferase. Residue Cys-133 participates in [4Fe-4S] cluster binding.

Belongs to the NifH/BchL/ChlL family. As to quaternary structure, homodimer. [4Fe-4S] cluster is required as a cofactor. In terms of processing, the reversible ADP-ribosylation of Arg-101 inactivates the nitrogenase reductase and regulates nitrogenase activity.

It carries out the reaction N2 + 8 reduced [2Fe-2S]-[ferredoxin] + 16 ATP + 16 H2O = H2 + 8 oxidized [2Fe-2S]-[ferredoxin] + 2 NH4(+) + 16 ADP + 16 phosphate + 6 H(+). In terms of biological role, the key enzymatic reactions in nitrogen fixation are catalyzed by the nitrogenase complex, which has 2 components: the iron protein and the molybdenum-iron protein. In Tolumonas auensis (strain DSM 9187 / NBRC 110442 / TA 4), this protein is Nitrogenase iron protein.